The chain runs to 160 residues: Sec-independent protein translocase protein TatB (160 aa).

Residues 1-21 (MFGMGFFEILVVLIVAIIFLG) form a helical membrane-spanning segment. The disordered stretch occupies residues 118-160 (HLNEEVSNEEALNKEVSSDESPKEVQLTTDNNAKEHDKEKEHV). Basic and acidic residues-rich tracts occupy residues 128–140 (ALNKEVSSDESPK) and 149–160 (NAKEHDKEKEHV).

The protein belongs to the TatB family. The Tat system comprises two distinct complexes: a TatABC complex, containing multiple copies of TatA, TatB and TatC subunits, and a separate TatA complex, containing only TatA subunits. Substrates initially bind to the TatABC complex, which probably triggers association of the separate TatA complex to form the active translocon.

It localises to the cell inner membrane. Its function is as follows. Part of the twin-arginine translocation (Tat) system that transports large folded proteins containing a characteristic twin-arginine motif in their signal peptide across membranes. Together with TatC, TatB is part of a receptor directly interacting with Tat signal peptides. TatB may form an oligomeric binding site that transiently accommodates folded Tat precursor proteins before their translocation. This Helicobacter pylori (strain J99 / ATCC 700824) (Campylobacter pylori J99) protein is Sec-independent protein translocase protein TatB.